Consider the following 20-residue polypeptide: Elastase (20 aa).

The Peptidase S1 domain maps to Val-1–Tyr-20.

Belongs to the peptidase S1 family. Elastase subfamily.

In terms of biological role, digests most rapidly at the C-terminal side of alanine residues, but also cleaves at valine and leucine residues. The sequence is that of Elastase from Gadus morhua (Atlantic cod).